A 529-amino-acid polypeptide reads, in one-letter code: Type I restriction enzyme StySPI methylase subunit (529 aa).

Residues 148–153, 178–180, and E216 contribute to the S-adenosyl-L-methionine site; these read QYFTPR and TAG. Positions 424–443 are disordered; it reads AEESEVADSEENKNADQHQA.

This sequence belongs to the N(4)/N(6)-methyltransferase family. The type I restriction/modification system is composed of three polypeptides R, M and S; the restriction enzyme has stoichiometry R(2)M(2)S(1) while the methyltransferase is M(2)S(1).

It catalyses the reaction a 2'-deoxyadenosine in DNA + S-adenosyl-L-methionine = an N(6)-methyl-2'-deoxyadenosine in DNA + S-adenosyl-L-homocysteine + H(+). Functionally, the subtype gamma methyltransferase (M) subunit of a type I restriction enzyme. The M and S subunits together form a methyltransferase (MTase) that methylates A-2 on the top strand and A-3 on the bottom strand of the sequence 5'-AACN(6)GTRC-3'. In the presence of the R subunit the complex can also act as an endonuclease, binding to the same target sequence but cutting the DNA some distance from this site. Whether the DNA is cut or modified depends on the methylation state of the target sequence. When the target site is unmodified, the DNA is cut. When the target site is hemimethylated, the complex acts as a maintenance MTase modifying the DNA so that both strands become methylated. After locating a non-methylated recognition site, the enzyme complex serves as a molecular motor that translocates DNA in an ATP-dependent manner until a collision occurs that triggers cleavage. This is Type I restriction enzyme StySPI methylase subunit from Salmonella potsdam.